Reading from the N-terminus, the 310-residue chain is Olfactory receptor 2A25 (310 aa).

Over 1-24 (MGGNQTSITEFLLLGFPIGPRIQM) the chain is Extracellular. A glycan (N-linked (GlcNAc...) asparagine) is linked at N4. Residues 25 to 48 (LLFGLFSLFYIFILLGNGTILGLI) traverse the membrane as a helical segment. Residues 49-56 (SLDSRLHT) lie on the Cytoplasmic side of the membrane. Residues 57-78 (PMYFFLSHLAVVDIACACSTVP) traverse the membrane as a helical segment. At 79–99 (QMLVNLLHPAKPISFAGCMTQ) the chain is on the extracellular side. Residues C96 and C188 are joined by a disulfide bond. A helical transmembrane segment spans residues 100 to 119 (MFLFLSFAHTECLLLVVMSY). Topologically, residues 120–138 (DRYVAICHPLRYSTIMTWK) are cytoplasmic. The helical transmembrane segment at 139-157 (VCITLALTSWILGVLLALV) threads the bilayer. The Extracellular portion of the chain corresponds to 158-195 (HLVLLLPLSFCGPQKLNHFFCEIMAVLKLACADTHINE). A helical membrane pass occupies residues 196–218 (VMVLAGAVSVLVGAFFSTVISYV). Residues 219 to 235 (HILCAILKIQSGEGCQK) are Cytoplasmic-facing. Residues 236 to 258 (AFSICSSHLCVVGLFYGTAIIMY) traverse the membrane as a helical segment. Residues 259–271 (VEPQYESPKEQKK) lie on the Extracellular side of the membrane. The chain crosses the membrane as a helical span at residues 272–291 (YLLLFHSLFNPMLNPLIYSL). Topologically, residues 292-310 (RNKEVQGTLKRMLEKKRTS) are cytoplasmic.

The protein belongs to the G-protein coupled receptor 1 family.

It is found in the cell membrane. In terms of biological role, odorant receptor. The chain is Olfactory receptor 2A25 (OR2A25) from Homo sapiens (Human).